The sequence spans 384 residues: S-adenosylmethionine synthase (384 aa).

H15 lines the ATP pocket. D17 is a Mg(2+) binding site. Residue E43 coordinates K(+). Residues E56 and Q99 each contribute to the L-methionine site. The tract at residues Q99 to R109 is flexible loop. Residues D164–K166, R231–F232, D240, R246–K247, A263, and K267 contribute to the ATP site. L-methionine is bound at residue D240. K271 lines the L-methionine pocket.

The protein belongs to the AdoMet synthase family. In terms of assembly, homotetramer; dimer of dimers. The cofactor is Mg(2+). K(+) is required as a cofactor.

The protein localises to the cytoplasm. It carries out the reaction L-methionine + ATP + H2O = S-adenosyl-L-methionine + phosphate + diphosphate. The protein operates within amino-acid biosynthesis; S-adenosyl-L-methionine biosynthesis; S-adenosyl-L-methionine from L-methionine: step 1/1. Catalyzes the formation of S-adenosylmethionine (AdoMet) from methionine and ATP. The overall synthetic reaction is composed of two sequential steps, AdoMet formation and the subsequent tripolyphosphate hydrolysis which occurs prior to release of AdoMet from the enzyme. This chain is S-adenosylmethionine synthase, found in Shewanella woodyi (strain ATCC 51908 / MS32).